Reading from the N-terminus, the 86-residue chain is Small ribosomal subunit protein bS18 (86 aa).

It belongs to the bacterial ribosomal protein bS18 family. As to quaternary structure, part of the 30S ribosomal subunit. Forms a tight heterodimer with protein bS6.

Its function is as follows. Binds as a heterodimer with protein bS6 to the central domain of the 16S rRNA, where it helps stabilize the platform of the 30S subunit. The protein is Small ribosomal subunit protein bS18 of Campylobacter jejuni subsp. jejuni serotype O:6 (strain 81116 / NCTC 11828).